An 858-amino-acid chain; its full sequence is Bifunctional uridylyltransferase/uridylyl-removing enzyme (858 aa).

Residues methionine 1–leucine 324 form a uridylyltransferase region. The tract at residues serine 325 to leucine 681 is uridylyl-removing. The HD domain maps to valine 443–leucine 565. ACT domains follow at residues glutamine 682 to serine 761 and isoleucine 790 to valine 858.

It belongs to the GlnD family. Requires Mg(2+) as cofactor.

The catalysed reaction is [protein-PII]-L-tyrosine + UTP = [protein-PII]-uridylyl-L-tyrosine + diphosphate. It carries out the reaction [protein-PII]-uridylyl-L-tyrosine + H2O = [protein-PII]-L-tyrosine + UMP + H(+). Its activity is regulated as follows. Uridylyltransferase (UTase) activity is inhibited by glutamine, while glutamine activates uridylyl-removing (UR) activity. Functionally, modifies, by uridylylation and deuridylylation, the PII regulatory proteins (GlnB and homologs), in response to the nitrogen status of the cell that GlnD senses through the glutamine level. Under low glutamine levels, catalyzes the conversion of the PII proteins and UTP to PII-UMP and PPi, while under higher glutamine levels, GlnD hydrolyzes PII-UMP to PII and UMP (deuridylylation). Thus, controls uridylylation state and activity of the PII proteins, and plays an important role in the regulation of nitrogen assimilation and metabolism. The protein is Bifunctional uridylyltransferase/uridylyl-removing enzyme of Burkholderia pseudomallei (strain K96243).